Reading from the N-terminus, the 260-residue chain is DNA repair protein RecO (260 aa).

Belongs to the RecO family.

Functionally, involved in DNA repair and RecF pathway recombination. In Levilactobacillus brevis (strain ATCC 367 / BCRC 12310 / CIP 105137 / JCM 1170 / LMG 11437 / NCIMB 947 / NCTC 947) (Lactobacillus brevis), this protein is DNA repair protein RecO.